The following is an 833-amino-acid chain: Leucine--tRNA ligase (833 aa).

The 'HIGH' region signature appears at P41–H52. The short motif at K610–S614 is the 'KMSKS' region element. K613 serves as a coordination point for ATP.

The protein belongs to the class-I aminoacyl-tRNA synthetase family.

It localises to the cytoplasm. It catalyses the reaction tRNA(Leu) + L-leucine + ATP = L-leucyl-tRNA(Leu) + AMP + diphosphate. The protein is Leucine--tRNA ligase of Streptococcus pyogenes serotype M5 (strain Manfredo).